A 215-amino-acid polypeptide reads, in one-letter code: Small ribosomal subunit protein uS5 (215 aa).

Polar residues predominate over residues 1 to 11 (MTDSSPQSNPN). Positions 1 to 61 (MTDSSPQSNP…GQDRDSEWQE (61 aa)) are disordered. The segment covering 12–28 (AVPGAADVPAAAQGQQQ) has biased composition (low complexity). Residues 39 to 61 (RGDRRGDRRGGRRGQDRDSEWQE) show a composition bias toward basic and acidic residues. One can recognise an S5 DRBM domain in the interval 59–122 (WQERVVQIRR…ADGKKHLVKV (64 aa)).

This sequence belongs to the universal ribosomal protein uS5 family. Part of the 30S ribosomal subunit. Contacts proteins S4 and S8.

Functionally, with S4 and S12 plays an important role in translational accuracy. In terms of biological role, located at the back of the 30S subunit body where it stabilizes the conformation of the head with respect to the body. The protein is Small ribosomal subunit protein uS5 of Synechococcus sp. (strain CC9902).